We begin with the raw amino-acid sequence, 99 residues long: L-rhamnose mutarotase (99 aa).

Residue Tyr18 participates in substrate binding. Catalysis depends on His22, which acts as the Proton donor. Substrate contacts are provided by residues Tyr41 and 76–77 (WW).

This sequence belongs to the rhamnose mutarotase family. As to quaternary structure, homodimer.

It is found in the cytoplasm. It carries out the reaction alpha-L-rhamnose = beta-L-rhamnose. It participates in carbohydrate metabolism; L-rhamnose metabolism. Its function is as follows. Involved in the anomeric conversion of L-rhamnose. The protein is L-rhamnose mutarotase of Shigella boydii serotype 18 (strain CDC 3083-94 / BS512).